A 183-amino-acid polypeptide reads, in one-letter code: Small ribosomal subunit protein bS16 (183 aa).

A compositionally biased stretch (basic and acidic residues) spans 149 to 161 (EKKAAEAAAKAEA). The interval 149 to 183 (EKKAAEAAAKAEAEAANAPAEEAPAAEATEAPAEA) is disordered. Over residues 162–183 (EAANAPAEEAPAAEATEAPAEA) the composition is skewed to low complexity.

This sequence belongs to the bacterial ribosomal protein bS16 family.

The chain is Small ribosomal subunit protein bS16 from Phocaeicola vulgatus (strain ATCC 8482 / DSM 1447 / JCM 5826 / CCUG 4940 / NBRC 14291 / NCTC 11154) (Bacteroides vulgatus).